Here is a 580-residue protein sequence, read N- to C-terminus: G1/S-specific cyclin CLN3 (580 aa).

The segment covering 454–469 (FTPTSSSSSPSPFNSP) has biased composition (low complexity). Disordered regions lie at residues 454–498 (FTPT…QNSF) and 546–580 (MATA…KKTR). 2 stretches are compositionally biased toward polar residues: residues 470–480 (YKTSSSMTTPD) and 563–580 (TSSV…KKTR).

This sequence belongs to the cyclin family.

In terms of biological role, essential for the control of the cell cycle at the G1/S (start) transition. CLN3 may be an upstream activator of the G1 cyclins which directly catalyze start. The sequence is that of G1/S-specific cyclin CLN3 (CLN3) from Saccharomyces cerevisiae (strain ATCC 204508 / S288c) (Baker's yeast).